The following is a 1230-amino-acid chain: Myosin-1 (1230 aa).

The disordered stretch occupies residues 1-32; that stretch reads MGISRRPKADKNASAADSAPGGKPNIQKAQFD. The Myosin motor domain maps to 39–713; the sequence is VGVSDLTLIS…TLFALEHMRD (675 aa). 132 to 139 is a binding site for ATP; the sequence is GESGAGKT. Residues 403 to 485 form an actin-binding region; sequence SIGILDIYGF…PGVFSAMKDA (83 aa). IQ domains are found at residues 717–737 and 738–763; these read HNMAARIQRVWRAFLQIRIEA and ATRIQRMFRKKREGKEFLELREKGHQ. Positions 771 to 961 constitute a TH1 domain; the sequence is RRRYSLLGSR…TIHTQAGEPP (191 aa). Disordered regions lie at residues 945–1018, 1033–1065, and 1116–1230; these read QDHY…AARP, TRNTSVQSTQSTRAVPPPPPPAPPAPPPAPVSK, and AYLE…EDDW. The span at 1033–1045 shows a compositional bias: polar residues; the sequence is TRNTSVQSTQSTR. Pro residues-rich tracts occupy residues 1047 to 1062 and 1122 to 1142; these read VPPPPPPAPPAPPPAP and TPPPPPPVATRPAPPPAPGPP. The SH3 domain maps to 1064–1123; sequence SKEPQYRVLYEFAGQSANEFSLKQGEIVTVLQKETNGWWLTKNVRGQGWAPTAYLEEVTP. A compositionally biased stretch (low complexity) spans 1179–1214; that stretch reads RDSGMSISSNGSGNNSGRSTPTPSLAGGLAEALRAR.

Belongs to the TRAFAC class myosin-kinesin ATPase superfamily. Myosin family.

It is found in the cytoplasm. The protein resides in the cytoskeleton. The protein localises to the actin patch. Its function is as follows. Type-I myosin implicated in the organization of the actin cytoskeleton. Required for proper actin cytoskeleton polarization. At the cell cortex, assembles in patch-like structures together with proteins from the actin-polymerizing machinery and promotes actin assembly. Functions as actin nucleation-promoting factor (NPF) for the Arp2/3 complex. In Sclerotinia sclerotiorum (strain ATCC 18683 / 1980 / Ss-1) (White mold), this protein is Myosin-1 (myoA).